The primary structure comprises 338 residues: UbiA prenyltransferase domain-containing protein 1 (338 aa).

Residues methionine 1 to glutamate 39 are disordered. Alanine 2 carries the N-acetylalanine modification. Residues alanine 15–threonine 24 are compositionally biased toward polar residues. The segment covering aspartate 25–glutamate 39 has biased composition (basic and acidic residues). 8 helical membrane passes run leucine 83–threonine 103, phenylalanine 134–threonine 154, leucine 160–phenylalanine 180, leucine 188–glycine 208, serine 209–leucine 229, isoleucine 245–leucine 267, threonine 277–glutamate 297, and leucine 315–leucine 335.

Belongs to the UbiA prenyltransferase family. In terms of assembly, interacts with HMGCR and SOAT1.

The protein localises to the endoplasmic reticulum membrane. The protein resides in the golgi apparatus membrane. Its subcellular location is the mitochondrion membrane. The enzyme catalyses menadiol + (2E,6E,10E)-geranylgeranyl diphosphate = menaquinol-4 + diphosphate. The catalysed reaction is all-trans-decaprenyl diphosphate + 4-hydroxybenzoate = 4-hydroxy-3-(all-trans-decaprenyl)benzoate + diphosphate. The protein operates within quinol/quinone metabolism; menaquinone biosynthesis. Its pathway is cofactor biosynthesis; ubiquinone biosynthesis. Its function is as follows. Prenyltransferase that mediates the formation of menaquinone-4 (MK-4) and coenzyme Q10. MK-4 is a vitamin K2 isoform required for endothelial cell development. Mediates the conversion of phylloquinone (PK) into MK-4, probably by cleaving the side chain of phylloquinone (PK) to release 2-methyl-1,4-naphthoquinone (menadione; K3) and then prenylating it with geranylgeranyl pyrophosphate (GGPP) to form MK-4. Also plays a role in cardiovascular development independently of MK-4 biosynthesis, by acting as a coenzyme Q10 biosynthetic enzyme: coenzyme Q10, also named ubiquinone, plays an important antioxidant role in the cardiovascular system. Mediates biosynthesis of coenzyme Q10 in the Golgi membrane, leading to protect cardiovascular tissues from NOS3/eNOS-dependent oxidative stress. This is UbiA prenyltransferase domain-containing protein 1 (Ubiad1) from Rattus norvegicus (Rat).